The following is a 210-amino-acid chain: Na(+)-translocating NADH-quinone reductase subunit D (210 aa).

5 helical membrane passes run 42-62 (FVMTLAVTFVTALSNFSVSLI), 72-92 (IIVQMAIIASLVIVVDQVLKA), 103-123 (VFVGLIITNCIVMGRAEAFAM), 131-151 (LIDGIGNGLGYGFVLITVGFF), and 178-198 (NGLMLLAPSAFFLIGFLIWVI).

Belongs to the NqrDE/RnfAE family. As to quaternary structure, composed of six subunits; NqrA, NqrB, NqrC, NqrD, NqrE and NqrF.

It is found in the cell inner membrane. The catalysed reaction is a ubiquinone + n Na(+)(in) + NADH + H(+) = a ubiquinol + n Na(+)(out) + NAD(+). Its function is as follows. NQR complex catalyzes the reduction of ubiquinone-1 to ubiquinol by two successive reactions, coupled with the transport of Na(+) ions from the cytoplasm to the periplasm. NqrA to NqrE are probably involved in the second step, the conversion of ubisemiquinone to ubiquinol. The protein is Na(+)-translocating NADH-quinone reductase subunit D of Vibrio parahaemolyticus serotype O3:K6 (strain RIMD 2210633).